The primary structure comprises 549 residues: Glucose-6-phosphate isomerase (549 aa).

Glu355 (proton donor) is an active-site residue. Residues His387 and Lys515 contribute to the active site.

The protein belongs to the GPI family.

The protein resides in the cytoplasm. The catalysed reaction is alpha-D-glucose 6-phosphate = beta-D-fructose 6-phosphate. Its pathway is carbohydrate biosynthesis; gluconeogenesis. The protein operates within carbohydrate degradation; glycolysis; D-glyceraldehyde 3-phosphate and glycerone phosphate from D-glucose: step 2/4. In terms of biological role, catalyzes the reversible isomerization of glucose-6-phosphate to fructose-6-phosphate. This Histophilus somni (strain 129Pt) (Haemophilus somnus) protein is Glucose-6-phosphate isomerase.